The following is a 215-amino-acid chain: Small ribosomal subunit protein uS3 (215 aa).

Positions 39–109 constitute a KH type-2 domain; sequence IRKFIKKRLE…EVLVDVKEVK (71 aa).

The protein belongs to the universal ribosomal protein uS3 family. Part of the 30S ribosomal subunit. Forms a tight complex with proteins S10 and S14.

Binds the lower part of the 30S subunit head. Binds mRNA in the 70S ribosome, positioning it for translation. This chain is Small ribosomal subunit protein uS3, found in Methylacidiphilum infernorum (isolate V4) (Methylokorus infernorum (strain V4)).